A 294-amino-acid chain; its full sequence is MHPRFQTAFAQLADNLQSALEPILADKYFPALLTGEQVSSLKSATGLDEDALAFALLPLAAACALTPLSNFNVGAIARGVSGTWYFGANMEFIGATMQQTVHAEQSAISHAWLSGEKALAAITVNYTPCGHCRQFMNELNSGLDLRIHLPGREAHALRDYLPDAFGPKDLEIKTLLMDEQDHGYALTGDALSQAAIAAANRSHMPYSKSPSGVALECKDGRIFSGSYAENAAFNPTLPPLQGALILLNLKGYDYPDIQRAVLAEKADAPLIQWDATSATLKALGCHSIDRVLLA.

CMP/dCMP-type deaminase domains lie at 48–168 (DEDA…FGPK) and 186–294 (LTGD…VLLA). 89–91 (NME) contributes to the substrate binding site. His102 is a binding site for Zn(2+). Glu104 serves as the catalytic Proton donor. The Zn(2+) site is built by Cys129 and Cys132.

It belongs to the cytidine and deoxycytidylate deaminase family. As to quaternary structure, homodimer. Requires Zn(2+) as cofactor.

The catalysed reaction is cytidine + H2O + H(+) = uridine + NH4(+). It catalyses the reaction 2'-deoxycytidine + H2O + H(+) = 2'-deoxyuridine + NH4(+). In terms of biological role, this enzyme scavenges exogenous and endogenous cytidine and 2'-deoxycytidine for UMP synthesis. The sequence is that of Cytidine deaminase from Shigella dysenteriae serotype 1 (strain Sd197).